The chain runs to 704 residues: Meprin A subunit beta (704 aa).

Residues 1-20 (MDARHWPWFLVFATFLLVSG) form the signal peptide. The propeptide occupies 21–64 (LPAPEKFVKDIDGGIDQDIFDINEDLGLDLFEGDIKLEASGRNS). The Extracellular portion of the chain corresponds to 21-654 (LPAPEKFVKD…RCEKRGSTKD (634 aa)). The Peptidase M12A domain maps to 63–257 (NSIIGDNYRW…LKLNQLYSCT (195 aa)). Cystine bridges form between Cys-104–Cys-256, Cys-125–Cys-145, and Cys-266–Cys-428. His-153 contacts Zn(2+). Glu-154 is an active-site residue. Residues His-157 and His-163 each contribute to the Zn(2+) site. 8 N-linked (GlcNAc...) asparagine glycosylation sites follow: Asn-193, Asn-219, Asn-316, Asn-422, Asn-437, Asn-528, Asn-547, and Asn-592. Residues 261–430 (SFMDSCDFEL…INLSETRCPH (170 aa)) enclose the MAM domain. One can recognise an MATH domain in the interval 431–585 (HIWHIQNFTQ…GDDVYILLTV (155 aa)). Positions 607–647 (VHNACSEVECQNGGICTLQEGRAECKCPAGEDWWYMGKRCE) constitute an EGF-like domain. Intrachain disulfides connect Cys-611-Cys-622, Cys-616-Cys-631, and Cys-633-Cys-646. A helical transmembrane segment spans residues 655–678 (TIVIAVSSTVTVFAVMLIITLISV). The Cytoplasmic portion of the chain corresponds to 679 to 704 (YCTRRKYRKKASAKTAAMNLENQHAF). Thr-693 is subject to Phosphothreonine.

In terms of assembly, homotetramer consisting of disulfide-linked beta subunits, or heterotetramer of two alpha and two beta subunits formed by non-covalent association of two disulfide-linked heterodimers. Interacts with MBL2 through its carbohydrate moiety. This interaction may inhibit its catalytic activity. Interacts with TSPAN8. It depends on Zn(2+) as a cofactor. In terms of processing, N-glycosylated; contains high mannose and/or complex biantennary structures. Post-translationally, proteolytically activated by trypsin in the intestinal lumen and kallikrein-related peptidases in other tissues. Phosphorylated by PKC at multiple sites of its cytoplasmic part. Phosphorylation dcreases activity at the cell surface, leading to diminished substrate cleavage. Kidney, intestinal brush borders and salivary ducts.

The protein localises to the cell membrane. It localises to the secreted. It catalyses the reaction Hydrolysis of proteins, including azocasein, and peptides. Hydrolysis of 5-His-|-Leu-6, 6-Leu-|-Cys-7, 14-Ala-|-Leu-15 and 19-Cys-|-Gly-20 bonds in insulin B chain.. Strongly inhibited by fetuin-A/AHSG. Its function is as follows. Membrane metallopeptidase that sheds many membrane-bound proteins. Exhibits a strong preference for acidic amino acids at the P1' position. Known substrates include: FGF19, VGFA, IL1B, IL18, procollagen I and III, E-cadherin, KLK7, gastrin, ADAM10, tenascin-C. The presence of several pro-inflammatory cytokine among substrates implicate MEP1B in inflammation. It is also involved in tissue remodeling due to its capability to degrade extracellular matrix components. This chain is Meprin A subunit beta (Mep1b), found in Rattus norvegicus (Rat).